Here is a 441-residue protein sequence, read N- to C-terminus: Putative serine/threonine-protein kinase F31E3.2 (441 aa).

A compositionally biased stretch (basic residues) spans 1–16 (MGNVATRKRPGCHHHI). A disordered region spans residues 1-41 (MGNVATRKRPGCHHHIGRNEENLDDDEDGPAKKRLRIGEPQ). The 256-residue stretch at 126 to 381 (FVLERQLGRG…FTVLHAHPFF (256 aa)) folds into the Protein kinase domain. Residues 132-140 (LGRGSFGVV) and lysine 156 contribute to the ATP site. Aspartate 253 acts as the Proton acceptor in catalysis.

The protein belongs to the protein kinase superfamily. Ser/Thr protein kinase family.

It carries out the reaction L-seryl-[protein] + ATP = O-phospho-L-seryl-[protein] + ADP + H(+). The enzyme catalyses L-threonyl-[protein] + ATP = O-phospho-L-threonyl-[protein] + ADP + H(+). This is Putative serine/threonine-protein kinase F31E3.2 from Caenorhabditis elegans.